A 313-amino-acid chain; its full sequence is Porphobilinogen deaminase (313 aa).

An S-(dipyrrolylmethanemethyl)cysteine modification is found at cysteine 242.

It belongs to the HMBS family. Monomer. Requires dipyrromethane as cofactor.

The enzyme catalyses 4 porphobilinogen + H2O = hydroxymethylbilane + 4 NH4(+). It functions in the pathway porphyrin-containing compound metabolism; protoporphyrin-IX biosynthesis; coproporphyrinogen-III from 5-aminolevulinate: step 2/4. Functionally, tetrapolymerization of the monopyrrole PBG into the hydroxymethylbilane pre-uroporphyrinogen in several discrete steps. The protein is Porphobilinogen deaminase of Yersinia enterocolitica serotype O:8 / biotype 1B (strain NCTC 13174 / 8081).